Here is a 990-residue protein sequence, read N- to C-terminus: Bifunctional glutamine synthetase adenylyltransferase/adenylyl-removing enzyme (990 aa).

The adenylyl removase stretch occupies residues 1–474; the sequence is MPTDNENSMT…HFNELVEESQ (474 aa). The segment at 484 to 990 is adenylyl transferase; it reads FIACQDAWRL…WDTLFGTCSE (507 aa).

Belongs to the GlnE family. It depends on Mg(2+) as a cofactor.

It catalyses the reaction [glutamine synthetase]-O(4)-(5'-adenylyl)-L-tyrosine + phosphate = [glutamine synthetase]-L-tyrosine + ADP. It carries out the reaction [glutamine synthetase]-L-tyrosine + ATP = [glutamine synthetase]-O(4)-(5'-adenylyl)-L-tyrosine + diphosphate. Involved in the regulation of glutamine synthetase GlnA, a key enzyme in the process to assimilate ammonia. When cellular nitrogen levels are high, the C-terminal adenylyl transferase (AT) inactivates GlnA by covalent transfer of an adenylyl group from ATP to specific tyrosine residue of GlnA, thus reducing its activity. Conversely, when nitrogen levels are low, the N-terminal adenylyl removase (AR) activates GlnA by removing the adenylyl group by phosphorolysis, increasing its activity. The regulatory region of GlnE binds the signal transduction protein PII (GlnB) which indicates the nitrogen status of the cell. The polypeptide is Bifunctional glutamine synthetase adenylyltransferase/adenylyl-removing enzyme (Alteromonas mediterranea (strain DSM 17117 / CIP 110805 / LMG 28347 / Deep ecotype)).